The sequence spans 266 residues: 4-hydroxy-tetrahydrodipicolinate reductase (266 aa).

10-15 (GPRGRM) lines the NAD(+) pocket. Position 38 (Lys-38) interacts with NADP(+). NAD(+)-binding positions include 99–101 (GTT) and 125–128 (APNF). The active-site Proton donor/acceptor is His-155. Residue His-156 participates in (S)-2,3,4,5-tetrahydrodipicolinate binding. The active-site Proton donor is the Lys-159. 165 to 166 (GT) contributes to the (S)-2,3,4,5-tetrahydrodipicolinate binding site.

It belongs to the DapB family.

The protein resides in the cytoplasm. The enzyme catalyses (S)-2,3,4,5-tetrahydrodipicolinate + NAD(+) + H2O = (2S,4S)-4-hydroxy-2,3,4,5-tetrahydrodipicolinate + NADH + H(+). It carries out the reaction (S)-2,3,4,5-tetrahydrodipicolinate + NADP(+) + H2O = (2S,4S)-4-hydroxy-2,3,4,5-tetrahydrodipicolinate + NADPH + H(+). Its pathway is amino-acid biosynthesis; L-lysine biosynthesis via DAP pathway; (S)-tetrahydrodipicolinate from L-aspartate: step 4/4. Functionally, catalyzes the conversion of 4-hydroxy-tetrahydrodipicolinate (HTPA) to tetrahydrodipicolinate. The protein is 4-hydroxy-tetrahydrodipicolinate reductase of Bacillus mycoides (strain KBAB4) (Bacillus weihenstephanensis).